A 273-amino-acid polypeptide reads, in one-letter code: Vitamin B12-binding protein (273 aa).

The first 18 residues, 1–18, serve as a signal peptide directing secretion; the sequence is MMKTLSSLLLLFSVSLQA. In terms of domain architecture, Fe/B12 periplasmic-binding spans 23–273; that stretch reads RVISLAPHAT…EHFASIEQKR (251 aa). Cysteines 183 and 263 form a disulfide.

This sequence belongs to the BtuF family. The complex is composed of two ATP-binding proteins (BtuD), two transmembrane proteins (BtuC) and a solute-binding protein (BtuF).

The protein resides in the periplasm. Functionally, part of the ABC transporter complex BtuCDF involved in vitamin B12 import. Binds vitamin B12 and delivers it to the periplasmic surface of BtuC. In Vibrio vulnificus (strain YJ016), this protein is Vitamin B12-binding protein.